A 992-amino-acid chain; its full sequence is ATP-dependent 6-phosphofructokinase subunit alpha (992 aa).

The interval 1–558 (MNNSVYGVAF…LYSNFMSTTV (558 aa)) is N-terminal catalytic PFK domain 1. ATP contacts are provided by residues Gly-193, 256–257 (RS), and 286–289 (GDGS). Asp-287 is a binding site for Mg(2+). Beta-D-fructose 6-phosphate is bound by residues 332 to 334 (SID), Arg-369, 376 to 378 (MGR), Glu-433, Lys-460, and 466 to 469 (HVQR). Asp-334 functions as the Proton acceptor in the catalytic mechanism. The interval 559–572 (NDDGSQLLPEADRL) is interdomain linker. Residues 573-992 (NIAIVHVGAP…AAKEDSALYV (420 aa)) form a C-terminal regulatory PFK domain 2 region. Beta-D-fructose 2,6-bisphosphate contacts are provided by residues Arg-643, 700 to 704 (TVSNN), Arg-738, 745 to 747 (QGG), Glu-805, Arg-831, 837 to 840 (HVQQ), and Arg-929.

The protein belongs to the phosphofructokinase type A (PFKA) family. ATP-dependent PFK group I subfamily. Eukaryotic two domain clade 'E' sub-subfamily. As to quaternary structure, heterooctamer of 4 alpha and 4 beta chains. The cofactor is Mg(2+).

It localises to the cytoplasm. The catalysed reaction is beta-D-fructose 6-phosphate + ATP = beta-D-fructose 1,6-bisphosphate + ADP + H(+). Its pathway is carbohydrate degradation; glycolysis; D-glyceraldehyde 3-phosphate and glycerone phosphate from D-glucose: step 3/4. Its activity is regulated as follows. Allosterically activated by ADP, AMP, or fructose 2,6-bisphosphate, and allosterically inhibited by ATP or citrate. Catalyzes the phosphorylation of D-fructose 6-phosphate to fructose 1,6-bisphosphate by ATP, the first committing step of glycolysis. In Kluyveromyces lactis (strain ATCC 8585 / CBS 2359 / DSM 70799 / NBRC 1267 / NRRL Y-1140 / WM37) (Yeast), this protein is ATP-dependent 6-phosphofructokinase subunit alpha (PFK1).